The following is a 381-amino-acid chain: Protein RecA (381 aa).

Gly-79–Thr-86 serves as a coordination point for ATP.

This sequence belongs to the RecA family.

It is found in the cytoplasm. In terms of biological role, can catalyze the hydrolysis of ATP in the presence of single-stranded DNA, the ATP-dependent uptake of single-stranded DNA by duplex DNA, and the ATP-dependent hybridization of homologous single-stranded DNAs. It interacts with LexA causing its activation and leading to its autocatalytic cleavage. The chain is Protein RecA from Streptococcus parasanguinis.